A 126-amino-acid chain; its full sequence is MSAPNPKAFPLADSALTQQILDVVQQSQNLRQLKKGANEATKTLNRGISEFIIMAADTEPIEILLHLPLLCEDKNVPYVFVPSKAALGRACGVSRPVIAASVTSNDASSIKNQIYGIKDKIETLLI.

It belongs to the eukaryotic ribosomal protein eL8 family. Component of the U3 snoRNP particle. Binds to the C'/D and B/C motifs in U3 snoRNA. Component of the 25S U4/U6.U5 tri-snRNP particle, a subcomplex of the spliceosome. Binds to the 5' stem-loop of U4 snRNA.

The protein resides in the nucleus. It localises to the nucleolus. Its function is as follows. Common component of the spliceosome and rRNA processing machinery. In association with the spliceosomal U4/U6.U5 tri-snRNP particle, required for splicing of pre-mRNA. In association with box C/D snoRNPs, required for processing of pre-ribosomal RNA (rRNA) and site-specific 2'-O-methylation of substrate RNAs. Essential for the accumulation and stability of U4 snRNA, U6 snRNA, and box C/D snoRNAs. This Candida albicans (strain SC5314 / ATCC MYA-2876) (Yeast) protein is 13 kDa ribonucleoprotein-associated protein (SNU13).